We begin with the raw amino-acid sequence, 162 residues long: Ribosomal RNA large subunit methyltransferase H (162 aa).

Residues Leu-78, Gly-109, and 128–133 each bind S-adenosyl-L-methionine; that span reads LSALTL.

This sequence belongs to the RNA methyltransferase RlmH family. As to quaternary structure, homodimer.

It is found in the cytoplasm. It catalyses the reaction pseudouridine(1915) in 23S rRNA + S-adenosyl-L-methionine = N(3)-methylpseudouridine(1915) in 23S rRNA + S-adenosyl-L-homocysteine + H(+). In terms of biological role, specifically methylates the pseudouridine at position 1915 (m3Psi1915) in 23S rRNA. In Psychrobacter arcticus (strain DSM 17307 / VKM B-2377 / 273-4), this protein is Ribosomal RNA large subunit methyltransferase H.